A 525-amino-acid polypeptide reads, in one-letter code: Glucose-6-phosphate isomerase (525 aa).

Glu347 (proton donor) is an active-site residue. Active-site residues include His378 and Lys493.

The protein belongs to the GPI family.

It localises to the cytoplasm. The enzyme catalyses alpha-D-glucose 6-phosphate = beta-D-fructose 6-phosphate. It functions in the pathway carbohydrate biosynthesis; gluconeogenesis. It participates in carbohydrate degradation; glycolysis; D-glyceraldehyde 3-phosphate and glycerone phosphate from D-glucose: step 2/4. In terms of biological role, catalyzes the reversible isomerization of glucose-6-phosphate to fructose-6-phosphate. The sequence is that of Glucose-6-phosphate isomerase from Chlamydia trachomatis serovar D (strain ATCC VR-885 / DSM 19411 / UW-3/Cx).